The sequence spans 339 residues: Cathepsin L-like peptidase (339 aa).

Positions 1-16 are cleaved as a signal peptide; that stretch reads MKILILLVAFVAAANA. Residues 17-121 constitute a propeptide, activation peptide; the sequence is VSLYELVKEE…VTFIEPANVE (105 aa). Asn-95 carries an N-linked (GlcNAc...) asparagine glycan. Intrachain disulfides connect Cys-143/Cys-186, Cys-177/Cys-219, and Cys-278/Cys-328. Cys-146 is a catalytic residue. Active-site residues include His-285 and Asn-306.

It belongs to the peptidase C1 family. In terms of assembly, dimer of a heavy and a light chain linked by disulfide bonds. Interacts with cystatin; the interaction results in inhibition of cathepsin L-like peptidase activity. In terms of tissue distribution, salivary gland. Midgut.

The enzyme catalyses Specificity close to that of papain. As compared to cathepsin B, cathepsin L exhibits higher activity toward protein substrates, but has little activity on Z-Arg-Arg-NHMec, and no peptidyl-dipeptidase activity.. With respect to regulation, more active in the presence of a reducing agent DTT. Functionally, proteinase exhibiting preference for Leu, Val and Phe residues at the P2 position. The sequence is that of Cathepsin L-like peptidase from Aedes aegypti (Yellowfever mosquito).